A 357-amino-acid polypeptide reads, in one-letter code: Dynein axonemal assembly factor 10 (357 aa).

6 WD repeats span residues 63-105, 115-154, 162-205, 207-249, 257-297, and 319-357; these read EKAK…VPVY, NTID…DPVA, ENKR…LRWE, NIKN…PTKG, AHKS…QRSK, and LSTQ…LHKI.

In terms of assembly, component of the PAQosome complex which is responsible for the biogenesis of several protein complexes and which consists of R2TP complex members RUVBL1, RUVBL2, RPAP3 and PIH1D1, URI complex members PFDN2, PFDN6, PDRG1, UXT and URI1 as well as ASDURF, POLR2E and DNAAF10/WDR92. Interacts with PIH1D1; the interaction associates DNAAF10 with the R2TP complex. Interacts with several dynein axonemal assembly factors.

The protein resides in the dynein axonemal particle. Its function is as follows. Key assembly factor specifically required for the stability of axonemal dynein heavy chains in cytoplasm. The sequence is that of Dynein axonemal assembly factor 10 (DNAAF10) from Bos taurus (Bovine).